A 201-amino-acid chain; its full sequence is 3-isopropylmalate dehydratase small subunit (201 aa).

The protein belongs to the LeuD family. LeuD type 1 subfamily. Heterodimer of LeuC and LeuD.

It catalyses the reaction (2R,3S)-3-isopropylmalate = (2S)-2-isopropylmalate. Its pathway is amino-acid biosynthesis; L-leucine biosynthesis; L-leucine from 3-methyl-2-oxobutanoate: step 2/4. In terms of biological role, catalyzes the isomerization between 2-isopropylmalate and 3-isopropylmalate, via the formation of 2-isopropylmaleate. The chain is 3-isopropylmalate dehydratase small subunit from Agrobacterium fabrum (strain C58 / ATCC 33970) (Agrobacterium tumefaciens (strain C58)).